The sequence spans 245 residues: 1-(5-phosphoribosyl)-5-[(5-phosphoribosylamino)methylideneamino] imidazole-4-carboxamide isomerase (245 aa).

Residue Asp-7 is the Proton acceptor of the active site. Residue Asp-129 is the Proton donor of the active site.

It belongs to the HisA/HisF family.

The protein resides in the cytoplasm. It catalyses the reaction 1-(5-phospho-beta-D-ribosyl)-5-[(5-phospho-beta-D-ribosylamino)methylideneamino]imidazole-4-carboxamide = 5-[(5-phospho-1-deoxy-D-ribulos-1-ylimino)methylamino]-1-(5-phospho-beta-D-ribosyl)imidazole-4-carboxamide. Its pathway is amino-acid biosynthesis; L-histidine biosynthesis; L-histidine from 5-phospho-alpha-D-ribose 1-diphosphate: step 4/9. The protein is 1-(5-phosphoribosyl)-5-[(5-phosphoribosylamino)methylideneamino] imidazole-4-carboxamide isomerase of Shewanella pealeana (strain ATCC 700345 / ANG-SQ1).